The chain runs to 153 residues: Transcriptional repressor NrdR (153 aa).

A zinc finger spans residues cysteine 3–cysteine 34. One can recognise an ATP-cone domain in the interval valine 49–aspartate 139.

It belongs to the NrdR family. The cofactor is Zn(2+).

Negatively regulates transcription of bacterial ribonucleotide reductase nrd genes and operons by binding to NrdR-boxes. The chain is Transcriptional repressor NrdR from Erythrobacter litoralis (strain HTCC2594).